Here is a 59-residue protein sequence, read N- to C-terminus: UPF0434 protein VIBHAR_01537 (59 aa).

It belongs to the UPF0434 family.

This is UPF0434 protein VIBHAR_01537 from Vibrio campbellii (strain ATCC BAA-1116).